The chain runs to 304 residues: Heme A synthase (304 aa).

Residues 1-8 are Cytoplasmic-facing; it reads MFNKRNLK. A helical membrane pass occupies residues 9–29; it reads WLSVLATIIMAFVQLGGALVT. At 30–67 the chain is on the extracellular side; the sequence is KTGSEDGCGSSWPLCHGALLPQNLPIDTIIELSHRAVS. Cys-37 and Cys-44 are oxidised to a cystine. The active site involves Glu-60. A heme o-binding site is contributed by His-63. A helical transmembrane segment spans residues 68–88; that stretch reads GLSLIVVLWLAITAWKHIGYI. At 89–93 the chain is on the cytoplasmic side; that stretch reads REVKP. A helical transmembrane segment spans residues 94 to 114; it reads LAIISIAFLLVQALIGAAAVI. Topologically, residues 115–123 are extracellular; the sequence is WQQNSYVLA. A helical membrane pass occupies residues 124–144; sequence LHFGISLISFSSVFVLMLIIF. His-125 serves as a coordination point for heme o. At 145–163 the chain is on the cytoplasmic side; sequence EVDKKYEADELYIRKPLRR. Residues 164–184 traverse the membrane as a helical segment; the sequence is LTWIMTGIVYLTIYTGALVRH. Topologically, residues 185-215 are extracellular; the sequence is AKASLAYGGWPLPFHDIIPHTEQDWVQFAHR. His-214 contacts heme b. Residues 216-236 traverse the membrane as a helical segment; the sequence is GMAFITFFWIMITFIHAVKNY. At 237–244 the chain is on the cytoplasmic side; the sequence is SENRTIRY. A helical membrane pass occupies residues 245-265; sequence GYTTAFILIILQVITGALSVM. The Extracellular portion of the chain corresponds to 266 to 270; that stretch reads TNVNL. Residues 271 to 291 traverse the membrane as a helical segment; it reads FIALLHALFITILFGMIAYFI. His-276 is a heme b binding site. At 292–304 the chain is on the cytoplasmic side; the sequence is MLMLRTIRSEKIK.

This sequence belongs to the COX15/CtaA family. Type 1 subfamily. As to quaternary structure, interacts with CtaB. Heme b is required as a cofactor.

The protein resides in the cell membrane. It catalyses the reaction Fe(II)-heme o + 2 A + H2O = Fe(II)-heme a + 2 AH2. Its pathway is porphyrin-containing compound metabolism; heme A biosynthesis; heme A from heme O: step 1/1. In terms of biological role, catalyzes the conversion of heme O to heme A by two successive hydroxylations of the methyl group at C8. The first hydroxylation forms heme I, the second hydroxylation results in an unstable dihydroxymethyl group, which spontaneously dehydrates, resulting in the formyl group of heme A. The sequence is that of Heme A synthase from Staphylococcus haemolyticus (strain JCSC1435).